Here is a 393-residue protein sequence, read N- to C-terminus: Formate-dependent phosphoribosylglycinamide formyltransferase (393 aa).

Residues 22–23 (EL) and Glu82 each bind N(1)-(5-phospho-beta-D-ribosyl)glycinamide. ATP-binding positions include Arg114, Lys155, 160–165 (SSGHGQ), 195–198 (EGFV), and Glu203. The region spanning 119–308 (RLAAEELGLP…QFALHARAVL (190 aa)) is the ATP-grasp domain. The Mg(2+) site is built by Glu267 and Glu279. N(1)-(5-phospho-beta-D-ribosyl)glycinamide-binding positions include Asp286, Lys356, and 363-364 (RR).

Belongs to the PurK/PurT family. As to quaternary structure, homodimer.

It carries out the reaction N(1)-(5-phospho-beta-D-ribosyl)glycinamide + formate + ATP = N(2)-formyl-N(1)-(5-phospho-beta-D-ribosyl)glycinamide + ADP + phosphate + H(+). Its pathway is purine metabolism; IMP biosynthesis via de novo pathway; N(2)-formyl-N(1)-(5-phospho-D-ribosyl)glycinamide from N(1)-(5-phospho-D-ribosyl)glycinamide (formate route): step 1/1. Functionally, involved in the de novo purine biosynthesis. Catalyzes the transfer of formate to 5-phospho-ribosyl-glycinamide (GAR), producing 5-phospho-ribosyl-N-formylglycinamide (FGAR). Formate is provided by PurU via hydrolysis of 10-formyl-tetrahydrofolate. This chain is Formate-dependent phosphoribosylglycinamide formyltransferase, found in Parabacteroides distasonis (strain ATCC 8503 / DSM 20701 / CIP 104284 / JCM 5825 / NCTC 11152).